Consider the following 381-residue polypeptide: Alpha-methylacyl-CoA racemase (381 aa).

Substrate is bound by residues R36 and 54-57 (LDLK). Position 57 is an N6-acetyllysine (K57). K86 and K100 each carry N6-acetyllysine; alternate. N6-succinyllysine; alternate is present on residues K86 and K100. At K117 the chain carries N6-acetyllysine. 120-125 (GHDINY) contributes to the substrate binding site. H121 functions as the Proton acceptor in the catalytic mechanism. D151 functions as the Proton donor in the catalytic mechanism. K267 carries the N6-succinyllysine modification. A disordered region spans residues 316–344 (TDGEQLPSPRPAPLLSRTPAVPSAKRDPS). The Microbody targeting signal signature appears at 379 to 381 (ANL).

Belongs to the CoA-transferase III family. Monomer.

Its subcellular location is the peroxisome. The protein resides in the mitochondrion. The catalysed reaction is a (2S)-2-methylacyl-CoA = a (2R)-2-methylacyl-CoA. It catalyses the reaction (25R)-3alpha,7alpha,12alpha-trihydroxy-5beta-cholestan-26-oyl-CoA = (25S)-3alpha,7alpha,12alpha-trihydroxy-5beta-cholestan-26-oyl-CoA. The enzyme catalyses (2R,6)-dimethylheptanoyl-CoA = (2S,6)-dimethylheptanoyl-CoA. It functions in the pathway lipid metabolism; bile acid biosynthesis. The protein operates within lipid metabolism; fatty acid metabolism. Functionally, catalyzes the interconversion of (R)- and (S)-stereoisomers of alpha-methyl-branched-chain fatty acyl-CoA esters. Acts only on coenzyme A thioesters, not on free fatty acids, and accepts as substrates a wide range of alpha-methylacyl-CoAs, including pristanoyl-CoA, trihydroxycoprostanoyl-CoA (an intermediate in bile acid synthesis), and arylpropionic acids like the anti-inflammatory drug ibuprofen (2-(4-isobutylphenyl)propionic acid) but neither 3-methyl-branched nor linear-chain acyl-CoAs. This is Alpha-methylacyl-CoA racemase (Amacr) from Mus musculus (Mouse).